We begin with the raw amino-acid sequence, 203 residues long: Glycerol-3-phosphate acyltransferase 1 (203 aa).

The next 6 helical transmembrane spans lie at 2-22 (LNFFLITIQFLSGAVMYSHII), 52-72 (GFPALMLDYFKGTFPIAFFVW), 82-102 (VIAFAALSGILGHAFSPFLKF), 117-137 (VLTKWEGPMVLGTVFTIFSIL), 150-168 (EDAFRVMIGFAALLIYTMW), and 170-190 (VFNGMPELAILYFGNFLIVFY).

It belongs to the PlsY family. In terms of assembly, probably interacts with PlsX.

Its subcellular location is the cell inner membrane. The catalysed reaction is an acyl phosphate + sn-glycerol 3-phosphate = a 1-acyl-sn-glycero-3-phosphate + phosphate. The protein operates within lipid metabolism; phospholipid metabolism. In terms of biological role, catalyzes the transfer of an acyl group from acyl-phosphate (acyl-PO(4)) to glycerol-3-phosphate (G3P) to form lysophosphatidic acid (LPA). This enzyme utilizes acyl-phosphate as fatty acyl donor, but not acyl-CoA or acyl-ACP. This is Glycerol-3-phosphate acyltransferase 1 from Thermotoga maritima (strain ATCC 43589 / DSM 3109 / JCM 10099 / NBRC 100826 / MSB8).